We begin with the raw amino-acid sequence, 354 residues long: Isopentenyl-diphosphate delta-isomerase (354 aa).

6 to 7 (RK) contacts substrate. Residues 63 to 65 (AMT), serine 93, and asparagine 122 contribute to the FMN site. Substrate is bound at residue 93–95 (SQR). Glutamine 160 contacts substrate. Glutamate 161 is a binding site for Mg(2+). FMN-binding positions include lysine 192, threonine 221, 273 to 275 (GIR), and 294 to 295 (SQ).

The protein belongs to the IPP isomerase type 2 family. As to quaternary structure, homooctamer. Dimer of tetramers. Requires FMN as cofactor. NADPH is required as a cofactor. Mg(2+) serves as cofactor.

The protein localises to the cytoplasm. It carries out the reaction isopentenyl diphosphate = dimethylallyl diphosphate. Functionally, involved in the biosynthesis of isoprenoids. Catalyzes the 1,3-allylic rearrangement of the homoallylic substrate isopentenyl (IPP) to its allylic isomer, dimethylallyl diphosphate (DMAPP). The chain is Isopentenyl-diphosphate delta-isomerase from Pyrobaculum islandicum (strain DSM 4184 / JCM 9189 / GEO3).